A 366-amino-acid polypeptide reads, in one-letter code: Chorismate synthase (366 aa).

NADP(+) contacts are provided by Arg-48 and Arg-54. FMN-binding positions include 125–127, 238–239, Gly-278, 293–297, and Arg-319; these read RSS, NA, and KPTSS.

This sequence belongs to the chorismate synthase family. Homotetramer. FMNH2 is required as a cofactor.

It carries out the reaction 5-O-(1-carboxyvinyl)-3-phosphoshikimate = chorismate + phosphate. Its pathway is metabolic intermediate biosynthesis; chorismate biosynthesis; chorismate from D-erythrose 4-phosphate and phosphoenolpyruvate: step 7/7. In terms of biological role, catalyzes the anti-1,4-elimination of the C-3 phosphate and the C-6 proR hydrogen from 5-enolpyruvylshikimate-3-phosphate (EPSP) to yield chorismate, which is the branch point compound that serves as the starting substrate for the three terminal pathways of aromatic amino acid biosynthesis. This reaction introduces a second double bond into the aromatic ring system. The protein is Chorismate synthase of Laribacter hongkongensis (strain HLHK9).